Here is a 156-residue protein sequence, read N- to C-terminus: Dynein 16 kDa light chain, flagellar outer arm (156 aa).

The 115-residue stretch at 2 to 116 (AAGLPPVQYS…LNQQVLSLTP (115 aa)) folds into the Thioredoxin domain. A disulfide bond links Cys37 and Cys40.

As to quaternary structure, consists of at least 3 heavy chains (alpha, beta and gamma), 2 intermediate chains and 8 light chains.

The protein resides in the cell projection. The protein localises to the cilium. It localises to the flagellum. It is found in the cytoplasm. Its subcellular location is the cytoskeleton. The protein resides in the flagellum axoneme. Functionally, may be involved in regulating the redox state of functionally important thiol groups within dynein. This is Dynein 16 kDa light chain, flagellar outer arm from Chlamydomonas reinhardtii (Chlamydomonas smithii).